Reading from the N-terminus, the 322-residue chain is MKTEQLQTEQKRIHFDGVMQKLGPFLGLFILVIIVSILNPSFLEPLNILNLLRQVAINGLIAFGMTFVILTGGIDLSVGAILALSSALVAGMIVSGVDPVLAIILGCIIGAVLGMINGLLITKGKMAPFIATLATMTVFRGLTLVYTDGNPITGLGTNYGFQMFGRGYFLGIPVPAITMVLAFVILWVLLHKTPFGRRTYAIGGNEKAALISGIKVTRVKVMIYSLAGLLSALAGAILTSRLHSAQPTAGESYELDAIAAVVLGGTSLSGGRGRIVGTLIGVLIIGTLNNGLNLLGVSSFYQLVVKGIVILIAVLLDRKKSA.

8 helical membrane passes run 22-42 (LGPF…NPSF), 48-70 (ILNL…FVIL), 77-94 (SVGA…GMIV), 101-121 (LAII…GLLI), 126-146 (MAPF…TLVY), 169-189 (FLGI…LWVL), 219-239 (VKVM…AILT), and 294-314 (LLGV…LIAV).

This sequence belongs to the binding-protein-dependent transport system permease family. AraH/RbsC subfamily. In terms of assembly, the complex is composed of an ATP-binding protein (RbsA), two transmembrane proteins (RbsC) and a solute-binding protein (RbsB).

The protein resides in the cell membrane. Part of the ABC transporter complex RbsABC involved in ribose import. Probably responsible for the translocation of the substrate across the membrane. This Bacillus subtilis (strain 168) protein is Ribose import permease protein RbsC (rbsC).